The chain runs to 67 residues: UPF0519 protein C (67 aa).

A disordered region spans residues 18–37 (KSQANLNSNSTNSPNNVQGL). A compositionally biased stretch (low complexity) spans 22–33 (NLNSNSTNSPNN).

Belongs to the UPF0519 family.

The sequence is that of UPF0519 protein C from Dictyostelium discoideum (Social amoeba).